Here is a 536-residue protein sequence, read N- to C-terminus: 2,3-bisphosphoglycerate-independent phosphoglycerate mutase (536 aa).

Positions 19 and 69 each coordinate Mn(2+). The Phosphoserine intermediate role is filled by Ser-69. Substrate contacts are provided by residues His-130, Arg-160–Asp-161, Arg-192, Arg-198, Arg-262–Arg-265, and Lys-335. Asp-402, His-406, Asp-443, His-444, and His-461 together coordinate Mn(2+).

It belongs to the BPG-independent phosphoglycerate mutase family. As to quaternary structure, monomer. Mn(2+) serves as cofactor.

It catalyses the reaction (2R)-2-phosphoglycerate = (2R)-3-phosphoglycerate. The protein operates within carbohydrate degradation; glycolysis; pyruvate from D-glyceraldehyde 3-phosphate: step 3/5. Catalyzes the interconversion of 2-phosphoglycerate and 3-phosphoglycerate. This Gloeobacter violaceus (strain ATCC 29082 / PCC 7421) protein is 2,3-bisphosphoglycerate-independent phosphoglycerate mutase.